A 119-amino-acid chain; its full sequence is Mitochondrial coiled-coil domain protein 1 (119 aa).

A mitochondrion-targeting transit peptide spans 1 to 24 (MVLPLPWLSRYHFLRLLLPSWSLA). The disordered stretch occupies residues 25-65 (PQGSHGCCSQNPKASMEEQTSSRGNGKMTSPPRGPGTHRTA). Polar residues predominate over residues 31–52 (CCSQNPKASMEEQTSSRGNGKM). A coiled-coil region spans residues 62-116 (HRTAELARAEELLEQQLELYQALLEGQEGAWEAQALVLKIQKLKEQMRRHQESLG).

In terms of tissue distribution, widely expressed. Expressed in adult and fetal liver, kidney and lung. Expressed in fetal brain. Weakly expressed in fetal spleen.

Its subcellular location is the mitochondrion. This Homo sapiens (Human) protein is Mitochondrial coiled-coil domain protein 1 (MCCD1).